Here is a 178-residue protein sequence, read N- to C-terminus: Large ribosomal subunit protein uL5 (178 aa).

Belongs to the universal ribosomal protein uL5 family. Part of the 50S ribosomal subunit; part of the 5S rRNA/L5/L18/L25 subcomplex. Contacts the 5S rRNA and the P site tRNA. Forms a bridge to the 30S subunit in the 70S ribosome.

This is one of the proteins that bind and probably mediate the attachment of the 5S RNA into the large ribosomal subunit, where it forms part of the central protuberance. In the 70S ribosome it contacts protein S13 of the 30S subunit (bridge B1b), connecting the 2 subunits; this bridge is implicated in subunit movement. Contacts the P site tRNA; the 5S rRNA and some of its associated proteins might help stabilize positioning of ribosome-bound tRNAs. This chain is Large ribosomal subunit protein uL5, found in Psychrobacter arcticus (strain DSM 17307 / VKM B-2377 / 273-4).